Reading from the N-terminus, the 141-residue chain is Putative antiporter subunit mnhB2 (141 aa).

The next 4 helical transmembrane spans lie at 10 to 30, 35 to 55, 70 to 90, and 116 to 136; these read TVTK…FFAG, GGGF…FLAF, KLMI…VFFG, and LFEL…MLAL.

It belongs to the CPA3 antiporters (TC 2.A.63) subunit B family. In terms of assembly, may form a heterooligomeric complex that consists of seven subunits: mnhA2, mnhB2, mnhC2, mnhD2, mnhE2, mnhF2 and mnhG2.

The protein resides in the cell membrane. The chain is Putative antiporter subunit mnhB2 (mnhB2) from Staphylococcus haemolyticus (strain JCSC1435).